Consider the following 124-residue polypeptide: UPF0538 protein (124 aa).

It belongs to the UPF0538 family.

The chain is UPF0538 protein from Dictyostelium discoideum (Social amoeba).